Here is a 255-residue protein sequence, read N- to C-terminus: Hydroxyacylglutathione hydrolase (255 aa).

7 residues coordinate Zn(2+): His55, His57, Asp59, His60, His112, Asp129, and His167.

This sequence belongs to the metallo-beta-lactamase superfamily. Glyoxalase II family. As to quaternary structure, monomer. Requires Zn(2+) as cofactor.

It carries out the reaction an S-(2-hydroxyacyl)glutathione + H2O = a 2-hydroxy carboxylate + glutathione + H(+). It functions in the pathway secondary metabolite metabolism; methylglyoxal degradation; (R)-lactate from methylglyoxal: step 2/2. In terms of biological role, thiolesterase that catalyzes the hydrolysis of S-D-lactoyl-glutathione to form glutathione and D-lactic acid. The protein is Hydroxyacylglutathione hydrolase of Halorhodospira halophila (strain DSM 244 / SL1) (Ectothiorhodospira halophila (strain DSM 244 / SL1)).